Reading from the N-terminus, the 242-residue chain is DNA-directed RNA polymerase III subunit rpc5 (242 aa).

Disordered regions lie at residues 1–22 (MSFSEDQAMEEAKLRNDETEEQ) and 153–172 (LKAAAGPSNSSSGTSTPRGP). The span at 155-172 (AAAGPSNSSSGTSTPRGP) shows a compositional bias: low complexity.

Component of the RNA polymerase III (Pol III) complex consisting of 17 subunits.

The protein localises to the cytoplasm. Its subcellular location is the nucleus. Its function is as follows. DNA-dependent RNA polymerase catalyzes the transcription of DNA into RNA using the four ribonucleoside triphosphates as substrates. Specific peripheric component of RNA polymerase III which synthesizes small RNAs, such as 5S rRNA and tRNAs. The RPC53/RPC4-RPC37/RPC5 subcomplex is required for terminator recognition and reinitiation. The sequence is that of DNA-directed RNA polymerase III subunit rpc5 (rpc37) from Schizosaccharomyces pombe (strain 972 / ATCC 24843) (Fission yeast).